The following is a 256-amino-acid chain: BI1-like protein (256 aa).

The next 7 helical transmembrane spans lie at 53–73, 85–105, 113–133, 138–158, 167–187, 189–209, and 228–248; these read VYGI…VVVL, PGIL…LHIY, LILL…SCAM, IVLQ…AYTF, FSFL…TSFI, MFFP…ALVF, and EYIL…LTIL.

The protein belongs to the BI1 family.

It is found in the membrane. In Arabidopsis thaliana (Mouse-ear cress), this protein is BI1-like protein.